A 378-amino-acid chain; its full sequence is SPbeta prophage-derived uncharacterized protein YorJ (378 aa).

The protein is SPbeta prophage-derived uncharacterized protein YorJ (yorJ) of Bacillus subtilis (strain 168).